The following is a 70-amino-acid chain: Putative membrane protein insertion efficiency factor (70 aa).

It belongs to the UPF0161 family.

The protein localises to the cell membrane. Could be involved in insertion of integral membrane proteins into the membrane. The polypeptide is Putative membrane protein insertion efficiency factor (Symbiobacterium thermophilum (strain DSM 24528 / JCM 14929 / IAM 14863 / T)).